We begin with the raw amino-acid sequence, 244 residues long: Acetylglutamate kinase (244 aa).

Substrate is bound by residues 40–41 (GG), Arg62, and Asn155.

The protein belongs to the acetylglutamate kinase family. ArgB subfamily.

The protein resides in the cytoplasm. The enzyme catalyses N-acetyl-L-glutamate + ATP = N-acetyl-L-glutamyl 5-phosphate + ADP. The protein operates within amino-acid biosynthesis; L-arginine biosynthesis; N(2)-acetyl-L-ornithine from L-glutamate: step 2/4. Its function is as follows. Catalyzes the ATP-dependent phosphorylation of N-acetyl-L-glutamate. This chain is Acetylglutamate kinase, found in Leuconostoc mesenteroides subsp. mesenteroides (strain ATCC 8293 / DSM 20343 / BCRC 11652 / CCM 1803 / JCM 6124 / NCDO 523 / NBRC 100496 / NCIMB 8023 / NCTC 12954 / NRRL B-1118 / 37Y).